The sequence spans 217 residues: Peptide methionine sulfoxide reductase MsrA (217 aa).

C56 is a catalytic residue.

The protein belongs to the MsrA Met sulfoxide reductase family.

The enzyme catalyses L-methionyl-[protein] + [thioredoxin]-disulfide + H2O = L-methionyl-(S)-S-oxide-[protein] + [thioredoxin]-dithiol. It carries out the reaction [thioredoxin]-disulfide + L-methionine + H2O = L-methionine (S)-S-oxide + [thioredoxin]-dithiol. Has an important function as a repair enzyme for proteins that have been inactivated by oxidation. Catalyzes the reversible oxidation-reduction of methionine sulfoxide in proteins to methionine. The polypeptide is Peptide methionine sulfoxide reductase MsrA (Corynebacterium melassecola).